A 358-amino-acid chain; its full sequence is MLLHFSPAKPLISPPNLRRNSPTFLISPPRSLRIRAIDAAQIFDYETQLKSEYRKSSALKIAVLGFGNFGQFLSKTLIRHGHDLITHSRSDYSDAANSIGARFFDNPHDLCEQHPDVVLLCTSILSTESVLRSFPFQRLRRSTLFVDVLSVKEFPKALFIKYLPKEFDILCTHPMFGPESGKHSWSGLPFVYDKVRIGDAASRQERCEKFLRIFENEGCKMVEMSCEKHDYYAAGSQFVTHTMGRVLEKYGVESSPINTKGYETLLDLVENTSSDSFELFYGLFMYNPNALEQLERLDMAFESVKKELFGRLHQQYRKQMFGGEVQSPKKTEQKLLNDGGVVPMNDISSSSSSSSSSS.

A chloroplast-targeting transit peptide spans 1 to 36; it reads MLLHFSPAKPLISPPNLRRNSPTFLISPPRSLRIRA. The region spanning 59–338 is the Prephenate/arogenate dehydrogenase domain; that stretch reads LKIAVLGFGN…KKTEQKLLND (280 aa). The disordered stretch occupies residues 336-358; sequence LNDGGVVPMNDISSSSSSSSSSS. Over residues 348–358 the composition is skewed to low complexity; the sequence is SSSSSSSSSSS.

This sequence belongs to the prephenate/arogenate dehydrogenase family. In terms of tissue distribution, expressed in roots, stems, leaves, flowers, siliques and seeds. More abundant in seeds.

Its subcellular location is the plastid. The protein resides in the chloroplast. The catalysed reaction is L-arogenate + NADP(+) = L-tyrosine + CO2 + NADPH. It participates in amino-acid biosynthesis; L-tyrosine biosynthesis; L-tyrosine from L-arogenate (NADP(+) route): step 1/1. Involved in the biosynthesis of tyrosine. Has a weak prephenate dehydrogenase activity. This Arabidopsis thaliana (Mouse-ear cress) protein is Arogenate dehydrogenase 2, chloroplastic (TYRAAT2).